Here is a 156-residue protein sequence, read N- to C-terminus: ATP synthase subunit b (156 aa).

The chain crosses the membrane as a helical span at residues 5–27; the sequence is ITLIGQMITFAIFVGFTMKFVWP.

It belongs to the ATPase B chain family. F-type ATPases have 2 components, F(1) - the catalytic core - and F(0) - the membrane proton channel. F(1) has five subunits: alpha(3), beta(3), gamma(1), delta(1), epsilon(1). F(0) has three main subunits: a(1), b(2) and c(10-14). The alpha and beta chains form an alternating ring which encloses part of the gamma chain. F(1) is attached to F(0) by a central stalk formed by the gamma and epsilon chains, while a peripheral stalk is formed by the delta and b chains.

The protein localises to the cell inner membrane. Its function is as follows. F(1)F(0) ATP synthase produces ATP from ADP in the presence of a proton or sodium gradient. F-type ATPases consist of two structural domains, F(1) containing the extramembraneous catalytic core and F(0) containing the membrane proton channel, linked together by a central stalk and a peripheral stalk. During catalysis, ATP synthesis in the catalytic domain of F(1) is coupled via a rotary mechanism of the central stalk subunits to proton translocation. Functionally, component of the F(0) channel, it forms part of the peripheral stalk, linking F(1) to F(0). This chain is ATP synthase subunit b, found in Francisella philomiragia subsp. philomiragia (strain ATCC 25017 / CCUG 19701 / FSC 153 / O#319-036).